Here is a 169-residue protein sequence, read N- to C-terminus: uncharacterized protein (169 aa).

Residues 18–130 form the HD domain; the sequence is VVEHCLAVSE…VAHADNLIFG (113 aa).

This is an uncharacterized protein from Methanocaldococcus jannaschii (strain ATCC 43067 / DSM 2661 / JAL-1 / JCM 10045 / NBRC 100440) (Methanococcus jannaschii).